The following is a 231-amino-acid chain: MSMAGKNYRNASAKVNRAQEYELAEAIEKVKEITTTKFDATVDVAIKLGVDPRHADQVVRGTVMLPYGTGKTVSVLVVCKENKAEEAREAGADFVGFEDYIEKIQNGWTDVDVIVATPDVMGQLGKVARILGPRGLMPNPKSGTVTMDVAKAVKEVKAGKIEFRVDKAGNIHAPVGKVSFDSANLAGNITSFIKEVVRLKPSAAKGQYLQGITISSTMSPGVKVKKDKFVA.

It belongs to the universal ribosomal protein uL1 family. Part of the 50S ribosomal subunit.

Functionally, binds directly to 23S rRNA. The L1 stalk is quite mobile in the ribosome, and is involved in E site tRNA release. In terms of biological role, protein L1 is also a translational repressor protein, it controls the translation of the L11 operon by binding to its mRNA. The sequence is that of Large ribosomal subunit protein uL1 from Chlorobaculum tepidum (strain ATCC 49652 / DSM 12025 / NBRC 103806 / TLS) (Chlorobium tepidum).